The chain runs to 652 residues: UvrABC system protein C (652 aa).

Positions 20–99 constitute a GIY-YIG domain; sequence PEPGCYLMRD…IKNHQPHFNV (80 aa). The 36-residue stretch at 209–244 folds into the UVR domain; it reads DELQRLLDEQMNRYAERLDFESAARVRDQLQGLDQL.

Belongs to the UvrC family. In terms of assembly, interacts with UvrB in an incision complex.

It localises to the cytoplasm. In terms of biological role, the UvrABC repair system catalyzes the recognition and processing of DNA lesions. UvrC both incises the 5' and 3' sides of the lesion. The N-terminal half is responsible for the 3' incision and the C-terminal half is responsible for the 5' incision. The protein is UvrABC system protein C of Parasynechococcus marenigrum (strain WH8102).